An 866-amino-acid polypeptide reads, in one-letter code: Primer-independent DNA polymerase PolB (866 aa).

The tract at residues 50–286 (SDLTLHIGFD…DRVPATIGAM (237 aa)) is exonuclease domain. Residues 287-385 (AVSRFTKTLK…GLLDILTPDY (99 aa)) are palm1 domain. Residues 386–481 (GNIRLSKNPD…NSESTSVFLP (96 aa)) are TPR1 domain. Positions 482-522 (FVQQVRENRNRHIKGSLEEKFWKEIGNSLYGKLAQGLRAKT) are fingers domain. The TPR2 domain stretch occupies residues 523–549 (AFDTARGLNRSLPPSSVTQPFFAAHVT). A palm2 domain region spans residues 550 to 678 (GFIRAVVGEL…PGQTLSRSTL (129 aa)). The thumb domain stretch occupies residues 679–866 (ISTREMWLSE…RKYPTFCLPV (188 aa)).

The cofactor is Mn(2+).

It carries out the reaction DNA(n) + a 2'-deoxyribonucleoside 5'-triphosphate = DNA(n+1) + diphosphate. In terms of biological role, DNA polymerase with primer-independent templated DNA polymerization activity, primer-dependent DNA polymerization activity with strand displacement, translesion synthesis activity across non-bulky base damage, 3'-5' exodeoxyribonuclease activity, and de novo primer synthesis activity. The enzyme is processive and faithful. Translation synthesis across abasic sites is coupled to de novo primer synthesis. Overexpression of wild-type protein increases survival of cells upon mitomycin C or UV treatment. The protein is Primer-independent DNA polymerase PolB (pi-polB) of Escherichia coli.